The following is a 752-amino-acid chain: Probable cell surface ferric reductase kap2 (752 aa).

Residues 40–60 (GKYGLGWVYFSVILLAISTII) form a helical membrane-spanning segment. 2 N-linked (GlcNAc...) asparagine glycosylation sites follow: asparagine 118 and asparagine 133. The next 2 membrane-spanning stretches (helical) occupy residues 157–177 (IGFP…FVTL) and 195–215 (PPLA…IIAL). The region spanning 201 to 348 (AGMIAVAMIP…WATVAIWMLS (148 aa)) is the Ferric oxidoreductase domain. 2 residues coordinate heme: histidine 237 and histidine 251. The next 3 helical transmembrane spans lie at 241-261 (GYLC…TPIW), 281-301 (GTGW…LPIL), and 306-326 (YELF…MIFW). Positions 313 and 327 each coordinate heme. The helical transmembrane segment at 331–351 (FLASWDYLWATVAIWMLSYAV) threads the bilayer. The FAD-binding FR-type domain occupies 349–475 (YAVRLFYVNW…EGPYGGMKRD (127 aa)). Asparagine 357 carries N-linked (GlcNAc...) asparagine glycosylation. 467–470 (GPYG) lines the NADP(+) pocket. Residues 482-502 (VVFFAGGSGITATASHLLNLI) traverse the membrane as a helical segment. Asparagine 627 carries N-linked (GlcNAc...) asparagine glycosylation. 714-715 (CG) contributes to the NADP(+) binding site.

The protein belongs to the ferric reductase (FRE) family. It depends on FAD as a cofactor. Heme is required as a cofactor.

The protein localises to the cell membrane. The enzyme catalyses 2 a Fe(II)-siderophore + NADP(+) + H(+) = 2 a Fe(III)-siderophore + NADPH. Its function is as follows. Probable cell surface ferric reductase that acts as a negative regulatory factor of growth and development. Involved in kojic acid production through the regulation of kojA expression. The chain is Probable cell surface ferric reductase kap2 from Aspergillus oryzae (strain ATCC 42149 / RIB 40) (Yellow koji mold).